A 283-amino-acid polypeptide reads, in one-letter code: uncharacterized protein (283 aa).

Y55 serves as the catalytic Proton donor.

Belongs to the aldo/keto reductase family.

It localises to the cytoplasm. It is found in the nucleus. This is an uncharacterized protein from Schizosaccharomyces pombe (strain 972 / ATCC 24843) (Fission yeast).